The chain runs to 354 residues: Uroporphyrinogen decarboxylase (354 aa).

Substrate contacts are provided by residues 27–31 (RQAGR), D77, Y154, S209, and H327.

This sequence belongs to the uroporphyrinogen decarboxylase family. Homodimer.

It localises to the cytoplasm. The catalysed reaction is uroporphyrinogen III + 4 H(+) = coproporphyrinogen III + 4 CO2. It participates in porphyrin-containing compound metabolism; protoporphyrin-IX biosynthesis; coproporphyrinogen-III from 5-aminolevulinate: step 4/4. Catalyzes the decarboxylation of four acetate groups of uroporphyrinogen-III to yield coproporphyrinogen-III. The sequence is that of Uroporphyrinogen decarboxylase from Methylobacillus flagellatus (strain ATCC 51484 / DSM 6875 / VKM B-1610 / KT).